The sequence spans 197 residues: Phospholipid hydroperoxide glutathione peroxidase (197 aa).

At Ser40 the chain carries Phosphoserine. Residue Sec73 is part of the active site. A non-standard amino acid (selenocysteine) is located at residue Sec73.

It belongs to the glutathione peroxidase family. As to quaternary structure, monomer. Has a tendency to form higher mass oligomers. Interacts with FUNDC1; this interaction promotes GPX4 recruitment into mitochondria through TOM/TIM complex where it is degraded by mitophagy.

The protein localises to the mitochondrion. The protein resides in the cytoplasm. The catalysed reaction is a hydroperoxy polyunsaturated fatty acid + 2 glutathione = a hydroxy polyunsaturated fatty acid + glutathione disulfide + H2O. It carries out the reaction 2 glutathione + H2O2 = glutathione disulfide + 2 H2O. It catalyses the reaction tert-butyl hydroperoxide + 2 glutathione = tert-butanol + glutathione disulfide + H2O. The enzyme catalyses cumene hydroperoxide + 2 glutathione = 2-phenylpropan-2-ol + glutathione disulfide + H2O. The catalysed reaction is (9S)-hydroperoxy-(10E,12Z)-octadecadienoate + 2 glutathione = (9S)-hydroxy-(10E,12Z)-octadecadienoate + glutathione disulfide + H2O. It carries out the reaction (13S)-hydroperoxy-(9Z,11E)-octadecadienoate + 2 glutathione = (13S)-hydroxy-(9Z,11E)-octadecadienoate + glutathione disulfide + H2O. It catalyses the reaction (5S)-hydroperoxy-(6E,8Z,11Z,14Z)-eicosatetraenoate + 2 glutathione = (5S)-hydroxy-(6E,8Z,11Z,14Z)-eicosatetraenoate + glutathione disulfide + H2O. The enzyme catalyses (12R)-hydroperoxy-(5Z,8Z,10E,14Z)-eicosatetraenoate + 2 glutathione = (12R)-hydroxy-(5Z,8Z,10E,14Z)-eicosatetraenoate + glutathione disulfide + H2O. The catalysed reaction is (12S)-hydroperoxy-(5Z,8Z,10E,14Z)-eicosatetraenoate + 2 glutathione = (12S)-hydroxy-(5Z,8Z,10E,14Z)-eicosatetraenoate + glutathione disulfide + H2O. It carries out the reaction (15S)-hydroperoxy-(5Z,8Z,11Z,13E)-eicosatetraenoate + 2 glutathione = (15S)-hydroxy-(5Z,8Z,11Z,13E)-eicosatetraenoate + glutathione disulfide + H2O. It catalyses the reaction (5S)-hydroperoxy-(6E,8Z,11Z,14Z,17Z)-eicosapentaenoate + 2 glutathione = (5S)-hydroxy-(6E,8Z,11Z,14Z,17Z)-eicosapentaenoate + glutathione disulfide + H2O. The enzyme catalyses (12S)-hydroperoxy-(5Z,8Z,10E,14Z,17Z)-eicosapentaenoate + 2 glutathione = (12S)-hydroxy-(5Z,8Z,10E,14Z,17Z)-eicosapentaenoate + glutathione disulfide + H2O. The catalysed reaction is (15S)-hydroperoxy-(5Z,8Z,11Z,13E,17Z)-eicosapentaenoate + 2 glutathione = (15S)-hydroxy-(5Z,8Z,11Z,13E,17Z)-eicosapentaenoate + glutathione disulfide + H2O. It carries out the reaction (15S)-hydroperoxy-(11Z,13E)-eicosadienoate + 2 glutathione = (15S)-hydroxy-(11Z,13E)-eicosadienoate + glutathione disulfide + H2O. It catalyses the reaction (17S)-hydroperoxy-(4Z,7Z,10Z,13Z,15E,19Z)-docosahexaenoate + 2 glutathione = (17S)-hydroxy-(4Z,7Z,10Z,13Z,15E,19Z)-docosahexaenoate + glutathione disulfide + H2O. The enzyme catalyses a hydroperoxy-1,2-diacyl-glycero-3-phosphocholine + 2 glutathione = a hydroxy-1,2-diacyl-glycero-3-phosphocholine + glutathione disulfide + H2O. Essential antioxidant peroxidase that directly reduces phospholipid hydroperoxide even if they are incorporated in membranes and lipoproteins. Can also reduce fatty acid hydroperoxide, cholesterol hydroperoxide and thymine hydroperoxide. Plays a key role in protecting cells from oxidative damage by preventing membrane lipid peroxidation. Required to prevent cells from ferroptosis, a non-apoptotic cell death resulting from an iron-dependent accumulation of lipid reactive oxygen species. The presence of selenocysteine (Sec) versus Cys at the active site is essential for life: it provides resistance to overoxidation and prevents cells against ferroptosis. The presence of Sec at the active site is also essential for the survival of a specific type of parvalbumin-positive interneurons, thereby preventing against fatal epileptic seizures. May be required to protect cells from the toxicity of ingested lipid hydroperoxides. Required for normal sperm development and male fertility. Essential for maturation and survival of photoreceptor cells. Plays a role in a primary T-cell response to viral and parasitic infection by protecting T-cells from ferroptosis and by supporting T-cell expansion. Plays a role of glutathione peroxidase in platelets in the arachidonic acid metabolism. Reduces hydroperoxy ester lipids formed by a 15-lipoxygenase that may play a role as down-regulator of the cellular 15-lipoxygenase pathway. Can also reduce small soluble hydroperoxides such as H2O2, cumene hydroperoxide and tert-butyl hydroperoxide. The sequence is that of Phospholipid hydroperoxide glutathione peroxidase from Sus scrofa (Pig).